We begin with the raw amino-acid sequence, 87 residues long: Small ribosomal subunit protein bS20 (87 aa).

Positions 1–25 are disordered; it reads MANIKSAKKRAVQSEKHRLHNASRR.

This sequence belongs to the bacterial ribosomal protein bS20 family.

Binds directly to 16S ribosomal RNA. The chain is Small ribosomal subunit protein bS20 from Baumannia cicadellinicola subsp. Homalodisca coagulata.